A 424-amino-acid polypeptide reads, in one-letter code: S-adenosylmethionine synthase (424 aa).

ATP is bound at residue histidine 16. Aspartate 18 contributes to the Mg(2+) binding site. Glutamate 44 contributes to the K(+) binding site. 2 residues coordinate L-methionine: glutamate 57 and glutamine 100. The tract at residues 100 to 110 (QSPDIAQGVNT) is flexible loop. Residues 175–177 (DGK), 251–252 (KF), aspartate 260, 266–267 (RK), alanine 283, and lysine 287 contribute to the ATP site. Position 260 (aspartate 260) interacts with L-methionine. Lysine 291 serves as a coordination point for L-methionine.

It belongs to the AdoMet synthase family. As to quaternary structure, homotetramer; dimer of dimers. Mg(2+) serves as cofactor. It depends on K(+) as a cofactor.

It localises to the cytoplasm. The catalysed reaction is L-methionine + ATP + H2O = S-adenosyl-L-methionine + phosphate + diphosphate. Its pathway is amino-acid biosynthesis; S-adenosyl-L-methionine biosynthesis; S-adenosyl-L-methionine from L-methionine: step 1/1. Catalyzes the formation of S-adenosylmethionine (AdoMet) from methionine and ATP. The overall synthetic reaction is composed of two sequential steps, AdoMet formation and the subsequent tripolyphosphate hydrolysis which occurs prior to release of AdoMet from the enzyme. The protein is S-adenosylmethionine synthase of Nostoc punctiforme (strain ATCC 29133 / PCC 73102).